Here is a 551-residue protein sequence, read N- to C-terminus: Synapse-associated protein of 47 kDa (551 aa).

2 disordered regions span residues 20–72 and 117–198; these read AGDE…AGKR and AMPA…GQGK. Composition is skewed to low complexity over residues 26-59, 117-128, and 137-146; these read PAPT…AAAA, AMPAMPSIPSIP, and DGAEGAEGAV. Ser-178 and Ser-182 each carry phosphoserine. Gly residues predominate over residues 182-197; it reads SGGGTPTGDEGQIGQG. Position 186 is a phosphothreonine (Thr-186). One can recognise a BSD domain in the interval 295 to 347; sequence VDFEFSYDTAYPTAIAIMAEDKALETMRFELVPKIITEENFWRNYFYRVSLII. The interval 360-391 is disordered; it reads VGQASSGEDANEVATKEKKSKTAEPAKGDSSV. The segment covering 373–386 has biased composition (basic and acidic residues); the sequence is ATKEKKSKTAEPAK. Residue Ser-433 is modified to Phosphoserine. Residues 487–551 are disordered; that stretch reads KDYEVVDEGG…DLIEDTDDLK (65 aa). A compositionally biased stretch (acidic residues) spans 514–523; it reads DDTEADEDEP. A compositionally biased stretch (polar residues) spans 524 to 535; it reads TISNLRTRSTNN. Thr-530 carries the phosphothreonine modification. Residues 536–551 are compositionally biased toward acidic residues; sequence DWEEYADLIEDTDDLK.

In terms of tissue distribution, expressed specifically in neurons and transported to synaptic terminals.

The chain is Synapse-associated protein of 47 kDa (Sap47) from Drosophila melanogaster (Fruit fly).